We begin with the raw amino-acid sequence, 215 residues long: MSLCLGFRELGLQPYEPVLEAMRRFTEQRSPDSQDEIWLVEHPAVFTQGQAGKAEHLLVPGDIPVVQTDRGGQVTYHGPGQLVAYLLLDVRRLGFGVRELVSRIEQTLIELLASYGVSAAAKPDAPGVYVDGAKIASLGLRIRNGRSFHGLALNVDMDLAPFRRINPCGYAGLAMTQLRDLAGPIELDEVRTRLRGQLVKHLDYAEQTTLTGGID.

One can recognise a BPL/LPL catalytic domain in the interval 31–206 (PDSQDEIWLV…QLVKHLDYAE (176 aa)). Substrate-binding positions include 70-77 (RGGQVTYH), 137-139 (SLG), and 150-152 (GLA). Catalysis depends on C168, which acts as the Acyl-thioester intermediate.

It belongs to the LipB family.

It is found in the cytoplasm. It carries out the reaction octanoyl-[ACP] + L-lysyl-[protein] = N(6)-octanoyl-L-lysyl-[protein] + holo-[ACP] + H(+). It functions in the pathway protein modification; protein lipoylation via endogenous pathway; protein N(6)-(lipoyl)lysine from octanoyl-[acyl-carrier-protein]: step 1/2. Catalyzes the transfer of endogenously produced octanoic acid from octanoyl-acyl-carrier-protein onto the lipoyl domains of lipoate-dependent enzymes. Lipoyl-ACP can also act as a substrate although octanoyl-ACP is likely to be the physiological substrate. The chain is Octanoyltransferase from Pseudomonas putida (strain W619).